Here is a 134-residue protein sequence, read N- to C-terminus: Small ribosomal subunit protein uS8 (134 aa).

This sequence belongs to the universal ribosomal protein uS8 family. As to quaternary structure, part of the 30S ribosomal subunit. Contacts proteins S5 and S12.

Functionally, one of the primary rRNA binding proteins, it binds directly to 16S rRNA central domain where it helps coordinate assembly of the platform of the 30S subunit. The protein is Small ribosomal subunit protein uS8 of Nitratiruptor sp. (strain SB155-2).